A 204-amino-acid polypeptide reads, in one-letter code: Imidazole glycerol phosphate synthase subunit HisH (204 aa).

Positions 5–204 constitute a Glutamine amidotransferase type-1 domain; sequence KVVIIDTGCA…AKLIQNFLEL (200 aa). The Nucleophile role is filled by Cys80. Residues His186 and Glu188 contribute to the active site.

In terms of assembly, heterodimer of HisH and HisF.

The protein resides in the cytoplasm. The catalysed reaction is 5-[(5-phospho-1-deoxy-D-ribulos-1-ylimino)methylamino]-1-(5-phospho-beta-D-ribosyl)imidazole-4-carboxamide + L-glutamine = D-erythro-1-(imidazol-4-yl)glycerol 3-phosphate + 5-amino-1-(5-phospho-beta-D-ribosyl)imidazole-4-carboxamide + L-glutamate + H(+). It catalyses the reaction L-glutamine + H2O = L-glutamate + NH4(+). It functions in the pathway amino-acid biosynthesis; L-histidine biosynthesis; L-histidine from 5-phospho-alpha-D-ribose 1-diphosphate: step 5/9. IGPS catalyzes the conversion of PRFAR and glutamine to IGP, AICAR and glutamate. The HisH subunit catalyzes the hydrolysis of glutamine to glutamate and ammonia as part of the synthesis of IGP and AICAR. The resulting ammonia molecule is channeled to the active site of HisF. This is Imidazole glycerol phosphate synthase subunit HisH from Vibrio parahaemolyticus serotype O3:K6 (strain RIMD 2210633).